Reading from the N-terminus, the 444-residue chain is Putative methylesterase 15, chloroplastic (444 aa).

Residues 1 to 27 are compositionally biased toward polar residues; sequence MGNSLRCISQEQDPNQKKPSSVVNGNS. Disordered regions lie at residues 1–36 and 48–91; these read MGNS…RRLS and PSLS…DSLI. The transit peptide at 1–58 directs the protein to the chloroplast; sequence MGNSLRCISQEQDPNQKKPSSVVNGNSSEKHVRRLSLIPSFRRRTLLPSLSCSGSSTS. Positions 53 to 63 are enriched in low complexity; it reads SGSSTSSTSKK. Over residues 64–80 the composition is skewed to basic residues; the sequence is GGIKTKKKIRERHHQEQ. Residues 81–90 are compositionally biased toward basic and acidic residues; the sequence is HHHDHEKDSL. Residues 188–312 form the AB hydrolase-1 domain; that stretch reads FVLVHGGGFG…QPDSNYDLME (125 aa). Aspartate 262 serves as the catalytic Acyl-ester intermediate. Active-site charge relay system residues include aspartate 390 and histidine 418.

The protein belongs to the AB hydrolase superfamily. Methylesterase family.

The protein resides in the plastid. It is found in the chloroplast. Its function is as follows. Putative methylesterase. This chain is Putative methylesterase 15, chloroplastic, found in Arabidopsis thaliana (Mouse-ear cress).